Reading from the N-terminus, the 377-residue chain is Succinyl-diaminopimelate desuccinylase (377 aa).

Position 66 (H66) interacts with Zn(2+). D68 is a catalytic residue. A Zn(2+)-binding site is contributed by D99. E133 acts as the Proton acceptor in catalysis. The Zn(2+) site is built by E134, E163, and H349.

It belongs to the peptidase M20A family. DapE subfamily. In terms of assembly, homodimer. Zn(2+) is required as a cofactor. Co(2+) serves as cofactor.

It carries out the reaction N-succinyl-(2S,6S)-2,6-diaminopimelate + H2O = (2S,6S)-2,6-diaminopimelate + succinate. It functions in the pathway amino-acid biosynthesis; L-lysine biosynthesis via DAP pathway; LL-2,6-diaminopimelate from (S)-tetrahydrodipicolinate (succinylase route): step 3/3. Functionally, catalyzes the hydrolysis of N-succinyl-L,L-diaminopimelic acid (SDAP), forming succinate and LL-2,6-diaminopimelate (DAP), an intermediate involved in the bacterial biosynthesis of lysine and meso-diaminopimelic acid, an essential component of bacterial cell walls. The sequence is that of Succinyl-diaminopimelate desuccinylase from Legionella pneumophila (strain Corby).